Here is a 242-residue protein sequence, read N- to C-terminus: Required for respiratory growth protein 7, mitochondrial (242 aa).

The protein belongs to the RRG7 family.

The protein localises to the mitochondrion. The protein is Required for respiratory growth protein 7, mitochondrial (RRG7) of Saccharomyces cerevisiae (strain ATCC 204508 / S288c) (Baker's yeast).